The sequence spans 155 residues: NADPH-dependent 7-cyano-7-deazaguanine reductase (155 aa).

Residues 1-20 (MMPNTDVSSLSMLGQQTETA) are compositionally biased toward polar residues. A disordered region spans residues 1-26 (MMPNTDVSSLSMLGQQTETAKSPEEA). The active-site Thioimide intermediate is cysteine 53. The Proton donor role is filled by aspartate 60. Residues 75-77 (VES) and 94-95 (HE) each bind substrate.

This sequence belongs to the GTP cyclohydrolase I family. QueF type 1 subfamily.

The protein localises to the cytoplasm. It carries out the reaction 7-aminomethyl-7-carbaguanine + 2 NADP(+) = 7-cyano-7-deazaguanine + 2 NADPH + 3 H(+). It functions in the pathway tRNA modification; tRNA-queuosine biosynthesis. In terms of biological role, catalyzes the NADPH-dependent reduction of 7-cyano-7-deazaguanine (preQ0) to 7-aminomethyl-7-deazaguanine (preQ1). The sequence is that of NADPH-dependent 7-cyano-7-deazaguanine reductase from Rhizobium etli (strain CIAT 652).